The chain runs to 877 residues: GPI ethanolamine phosphate transferase 2 (877 aa).

N-linked (GlcNAc...) asparagine glycans are attached at residues N190 and N368. The next 5 helical transmembrane spans lie at 409 to 429 (VDIY…FGLF), 443 to 463 (YNWY…ASSL), 464 to 484 (IEEE…ALYF), 528 to 548 (VDLL…LIYS), and 570 to 590 (DFGS…SFSF). N611 carries N-linked (GlcNAc...) asparagine glycosylation. Helical transmembrane passes span 634-654 (IHLS…RIVL), 683-703 (EIVP…KLLA), 716-736 (LMII…FSMG), 758-778 (VFLV…FWSL), 817-837 (LAGF…CFNL), and 854-876 (FASW…ILAL).

Belongs to the PIGG/PIGN/PIGO family. PIGG subfamily.

The protein resides in the endoplasmic reticulum membrane. It participates in glycolipid biosynthesis; glycosylphosphatidylinositol-anchor biosynthesis. Ethanolamine phosphate transferase involved in glycosylphosphatidylinositol-anchor biosynthesis. Transfers ethanolamine phosphate to the GPI second mannose. The sequence is that of GPI ethanolamine phosphate transferase 2 (LAS21) from Debaryomyces hansenii (strain ATCC 36239 / CBS 767 / BCRC 21394 / JCM 1990 / NBRC 0083 / IGC 2968) (Yeast).